The primary structure comprises 389 residues: Phosphopentomutase (389 aa).

Mn(2+)-binding residues include Asp10, Asp282, His287, Asp323, His324, and His335.

Belongs to the phosphopentomutase family. Requires Mn(2+) as cofactor.

It is found in the cytoplasm. It carries out the reaction 2-deoxy-alpha-D-ribose 1-phosphate = 2-deoxy-D-ribose 5-phosphate. The catalysed reaction is alpha-D-ribose 1-phosphate = D-ribose 5-phosphate. It functions in the pathway carbohydrate degradation; 2-deoxy-D-ribose 1-phosphate degradation; D-glyceraldehyde 3-phosphate and acetaldehyde from 2-deoxy-alpha-D-ribose 1-phosphate: step 1/2. In terms of biological role, isomerase that catalyzes the conversion of deoxy-ribose 1-phosphate (dRib-1-P) and ribose 1-phosphate (Rib-1-P) to deoxy-ribose 5-phosphate (dRib-5-P) and ribose 5-phosphate (Rib-5-P), respectively. This chain is Phosphopentomutase, found in Clostridium kluyveri (strain NBRC 12016).